The sequence spans 167 residues: Small ribosomal subunit protein uS5 (167 aa).

Positions 11-74 constitute an S5 DRBM domain; the sequence is LQEKLIAVNR…EKARRNMINV (64 aa).

The protein belongs to the universal ribosomal protein uS5 family. In terms of assembly, part of the 30S ribosomal subunit. Contacts proteins S4 and S8.

In terms of biological role, with S4 and S12 plays an important role in translational accuracy. Its function is as follows. Located at the back of the 30S subunit body where it stabilizes the conformation of the head with respect to the body. The protein is Small ribosomal subunit protein uS5 of Klebsiella pneumoniae subsp. pneumoniae (strain ATCC 700721 / MGH 78578).